The chain runs to 309 residues: MRKTITVIAVLIVLALIGVGIVQYVNTSDDSDFIGQPGEPTGTETTEPPVQPDWCPAVEVIAAPGTWESAANDDPINPTANPLSFMLSITQPLQERYSADDVKVWTLPYTAQFRNINSQNEMSYDDSRNEGTAKMNEELINTHNECPATEFIIVGFSQGAVIAGDVAAQIGSEQGVIPADSVRGVALIADGRREPGVGQFPGTFVDGIGAEVTLQPLNLLVQPIVPGATMRGGRAGGFGVLNDRVQDICAPNDAICDAPVNVGNALDRALAMVSANGVHALYATNPDVFPGTTTNAWVVDWATNLIDNG.

A helical membrane pass occupies residues Ile-5–Val-25. Cys-55 and Cys-146 form a disulfide bridge. Residues Ser-157, Asp-253, and His-279 contribute to the active site. An intrachain disulfide couples Cys-249 to Cys-256.

The protein belongs to the cutinase family.

It localises to the cell membrane. The catalysed reaction is a butanoate ester + H2O = an aliphatic alcohol + butanoate + H(+). Its activity is regulated as follows. Inhibited by tetrahydrolipstatin (THL), a specific lipase inhibitor. Esterase that may be involved in cell wall biosynthesis and/or maintenance. Hydrolyzes pNP-butyrate (C4). The sequence is that of Carboxylesterase Culp6 homolog from Corynebacterium glutamicum (strain ATCC 13032 / DSM 20300 / JCM 1318 / BCRC 11384 / CCUG 27702 / LMG 3730 / NBRC 12168 / NCIMB 10025 / NRRL B-2784 / 534).